Consider the following 776-residue polypeptide: Ribosomal biogenesis protein LAS1L (776 aa).

Acidic residues predominate over residues 185 to 227 (DEDQLDAEDPEEEEREIIADDVLEEIPEPQDDDKDEELAVEDD). Residues 185–247 (DEDQLDAEDP…SHPEPSSRHK (63 aa)) form a disordered region. The span at 228 to 247 (ANTKGNEEVASHPEPSSRHK) shows a compositional bias: basic and acidic residues. 2 positions are modified to phosphoserine: Ser-425 and Ser-509. Residues 501-646 (KAIEGSSSSS…DYDDDEEEDR (146 aa)) form a disordered region. Basic and acidic residues predominate over residues 544–557 (GNLKDVKQEEKKEN). Composition is skewed to acidic residues over residues 558–602 (EEEE…EEEE) and 611–646 (MEAD…EEDR). Ser-658 is subject to Phosphoserine. An interaction with NOL9 region spans residues 677 to 696 (SAWQVSSEDVRWGTFPLGRL). The tract at residues 733–759 (SSTLSLCCGGSNTNSSSSSSSGNMEGL) is disordered. Residues 741–755 (GGSNTNSSSSSSSGN) show a composition bias toward low complexity.

It belongs to the LAS1 family. As to quaternary structure, component of some MLL1/MLL complex, at least composed of the core components KMT2A/MLL1, ASH2L, HCFC1/HCF1, WDR5 and RBBP5, as well as the facultative components BACC1, CHD8, E2F6, HSP70, INO80C, KANSL1, LAS1L, MAX, MCRS1, MGA, MYST1/MOF, PELP1, PHF20, PRP31, RING2, RUVB1/TIP49A, RUVB2/TIP49B, SENP3, TAF1, TAF4, TAF6, TAF7, TAF9 and TEX10. Component of the 5FMC complex, at least composed of PELP1, LAS1L, TEX10, WDR18 and SENP3; the complex interacts with methylated CHTOP and ZNF148. Interacts with NOL9 to form an ITS2 pre-rRNA endonuclease-kinase complex.

The protein localises to the nucleus. The protein resides in the nucleolus. Its subcellular location is the nucleoplasm. It is found in the cytoplasm. Required for the synthesis of the 60S ribosomal subunit and maturation of the 28S rRNA. Functions as a component of the Five Friends of Methylated CHTOP (5FMC) complex; the 5FMC complex is recruited to ZNF148 by methylated CHTOP, leading to desumoylation of ZNF148 and subsequent transactivation of ZNF148 target genes. Required for the efficient pre-rRNA processing at both ends of internal transcribed spacer 2 (ITS2). The sequence is that of Ribosomal biogenesis protein LAS1L (Las1l) from Mus musculus (Mouse).